A 534-amino-acid polypeptide reads, in one-letter code: Cytokine-like nuclear factor N-PAC (534 aa).

In terms of domain architecture, PWWP spans 8–66 (QGDLVWGKLGRYPPWPGKIVNPPKDLKKPRGKKCLFVKFFGTEDHAWIKVEQLKPYHAH). Composition is skewed to basic and acidic residues over residues 93-122 (AKAK…QTGE) and 138-157 (RSRD…DKDS). The segment at 93 to 168 (AKAKEHAKEH…SPQPSSLKKL (76 aa)) is disordered. The segment at residues 144-156 (PRKRGRPPKDDKD) is a DNA-binding region (a.T hook). Residues 190-193 (DSWL) form an interaction with histone H3 region. The dehydrogenase domain stretch occupies residues 242–534 (GNIIPTDKKI…MSAVYRAYIH (293 aa)). NAD(+) contacts are provided by residues 252–266 (GFLG…IVSN), Thr-343, and Lys-486.

It belongs to the HIBADH-related family. NP60 subfamily. As to quaternary structure, homotetramere. Binds to mononucleosomes.

The protein resides in the nucleus. Its subcellular location is the chromosome. In terms of biological role, cytokine-like nuclear factor with chromatin gene reader activity involved in chromatin modification and regulation of gene expression. Acts as a nucleosome-destabilizing factor that is recruited to genes during transcriptional activation. Recognizes and binds histone H3 without a preference for specific epigenetic markers and also binds DNA. Interacts with KDM1B and promotes its histone demethylase activity by facilitating the capture of H3 tails, they form a multifunctional enzyme complex that modifies transcribed chromatin and facilitates Pol II transcription through nucleosomes. This Xenopus tropicalis (Western clawed frog) protein is Cytokine-like nuclear factor N-PAC (glyr1).